The chain runs to 288 residues: Carbon monoxide dehydrogenase medium chain (288 aa).

Residues 1 to 177 (MIPGSFDYHR…TAIRIPVPPT (177 aa)) form the FAD-binding PCMH-type domain. FAD is bound by residues 32–36 (AGGHS) and 111–115 (TIGGN).

Dimer of heterotrimers. Each heterotrimer consists of a large, a medium and a small subunit. FAD serves as cofactor.

The enzyme catalyses CO + a quinone + H2O = a quinol + CO2. In terms of biological role, catalyzes the oxidation of carbon monoxide to carbon dioxide. The sequence is that of Carbon monoxide dehydrogenase medium chain (coxM) from Afipia carboxidovorans (strain ATCC 49405 / DSM 1227 / KCTC 32145 / OM5) (Oligotropha carboxidovorans).